An 83-amino-acid chain; its full sequence is uncharacterized protein (83 aa).

This is an uncharacterized protein from Rickettsia conorii (strain ATCC VR-613 / Malish 7).